Reading from the N-terminus, the 162-residue chain is Large ribosomal subunit protein uL10 (162 aa).

It belongs to the universal ribosomal protein uL10 family. In terms of assembly, part of the ribosomal stalk of the 50S ribosomal subunit. The N-terminus interacts with L11 and the large rRNA to form the base of the stalk. The C-terminus forms an elongated spine to which L12 dimers bind in a sequential fashion forming a multimeric L10(L12)X complex.

Forms part of the ribosomal stalk, playing a central role in the interaction of the ribosome with GTP-bound translation factors. This is Large ribosomal subunit protein uL10 from Phytoplasma mali (strain AT).